Reading from the N-terminus, the 82-residue chain is Pigment-dispersing hormone peptides (82 aa).

The N-terminal stretch at 1–26 is a signal peptide; that stretch reads MIGKYLSWFMLAFLFGFVLESYRVQS. The residue at position 80 (alanine 80) is an Alanine amide.

Belongs to the arthropod PDH family. As to expression, expressed strongly in the head and weakly in the ventral nerve cord. Not detected in the midgut cecum or hindgut. In the cephalic neural complex, specifically localized to cells within the optic lobe, anteromedian protocerebrum, accessory lobe, tritocerebrum, and subesophageal ganglion.

The protein resides in the secreted. In terms of biological role, the pigment-dispersing hormone causes the migration of the distal retinal pigment into the proximal end of the pigment chromatophore cells and thus decreases the amount of light entering the retinulas. May also function as a neurotransmitter and/or neuromodulator. The protein is Pigment-dispersing hormone peptides of Armadillidium vulgare (Pillbug).